The sequence spans 64 residues: Large ribosomal subunit protein bL35 (64 aa).

The protein belongs to the bacterial ribosomal protein bL35 family.

In Clavibacter michiganensis subsp. michiganensis (strain NCPPB 382), this protein is Large ribosomal subunit protein bL35.